The chain runs to 227 residues: DNA repair protein RecO (227 aa).

Belongs to the RecO family.

Functionally, involved in DNA repair and RecF pathway recombination. The chain is DNA repair protein RecO from Pseudomonas putida (strain W619).